A 160-amino-acid chain; its full sequence is Nucleotide-binding protein Tgr7_1196 (160 aa).

It belongs to the YajQ family.

In terms of biological role, nucleotide-binding protein. The sequence is that of Nucleotide-binding protein Tgr7_1196 from Thioalkalivibrio sulfidiphilus (strain HL-EbGR7).